The sequence spans 55 residues: Large ribosomal subunit protein bL33 (55 aa).

It belongs to the bacterial ribosomal protein bL33 family.

This chain is Large ribosomal subunit protein bL33, found in Ruegeria sp. (strain TM1040) (Silicibacter sp.).